Consider the following 520-residue polypeptide: Sodium-dependent dicarboxylate transporter SdcS (520 aa).

Helical transmembrane passes span 30-50 (TGQL…LLFF), 55-75 (LPWK…WWIT), 77-97 (AIPI…GHIL), 104-124 (SEYG…AIAM), 160-180 (SMFV…LAII), 207-227 (IGYA…PLII), 242-262 (FAKW…ITWL), 298-318 (KVVQ…EFLL), 323-343 (VTSS…LFII), 362-382 (ELPW…KGIS), 399-419 (GVSP…LTEV), 428-448 (MILP…LLLM), 452-472 (AMAA…AIIF), and 491-511 (LISA…VLGI).

This sequence belongs to the SLC13A/DASS transporter (TC 2.A.47) family. NADC subfamily.

It is found in the cell membrane. Mediates the transport of the dicarboxylates fumarate, malate, and succinate across the cytoplasmic membrane via a Na(+)-electrochemical gradient. The chain is Sodium-dependent dicarboxylate transporter SdcS (sdcS) from Staphylococcus aureus (strain MRSA252).